We begin with the raw amino-acid sequence, 227 residues long: Cytochrome c oxidase subunit 2 (227 aa).

The Mitochondrial intermembrane portion of the chain corresponds to Met1–Ser14. The helical transmembrane segment at Pro15–Met45 threads the bilayer. The Mitochondrial matrix portion of the chain corresponds to Leu46–Gln59. The chain crosses the membrane as a helical span at residues Glu60 to Met87. The Mitochondrial intermembrane segment spans residues Asp88–Ser227. 6 residues coordinate Cu cation: His161, Cys196, Glu198, Cys200, His204, and Met207. Mg(2+) is bound at residue Glu198.

It belongs to the cytochrome c oxidase subunit 2 family. In terms of assembly, component of the cytochrome c oxidase (complex IV, CIV), a multisubunit enzyme composed of 14 subunits. The complex is composed of a catalytic core of 3 subunits MT-CO1, MT-CO2 and MT-CO3, encoded in the mitochondrial DNA, and 11 supernumerary subunits COX4I, COX5A, COX5B, COX6A, COX6B, COX6C, COX7A, COX7B, COX7C, COX8 and NDUFA4, which are encoded in the nuclear genome. The complex exists as a monomer or a dimer and forms supercomplexes (SCs) in the inner mitochondrial membrane with NADH-ubiquinone oxidoreductase (complex I, CI) and ubiquinol-cytochrome c oxidoreductase (cytochrome b-c1 complex, complex III, CIII), resulting in different assemblies (supercomplex SCI(1)III(2)IV(1) and megacomplex MCI(2)III(2)IV(2)). Found in a complex with TMEM177, COA6, COX18, COX20, SCO1 and SCO2. Interacts with TMEM177 in a COX20-dependent manner. Interacts with COX20. Interacts with COX16. Cu cation is required as a cofactor.

Its subcellular location is the mitochondrion inner membrane. It catalyses the reaction 4 Fe(II)-[cytochrome c] + O2 + 8 H(+)(in) = 4 Fe(III)-[cytochrome c] + 2 H2O + 4 H(+)(out). In terms of biological role, component of the cytochrome c oxidase, the last enzyme in the mitochondrial electron transport chain which drives oxidative phosphorylation. The respiratory chain contains 3 multisubunit complexes succinate dehydrogenase (complex II, CII), ubiquinol-cytochrome c oxidoreductase (cytochrome b-c1 complex, complex III, CIII) and cytochrome c oxidase (complex IV, CIV), that cooperate to transfer electrons derived from NADH and succinate to molecular oxygen, creating an electrochemical gradient over the inner membrane that drives transmembrane transport and the ATP synthase. Cytochrome c oxidase is the component of the respiratory chain that catalyzes the reduction of oxygen to water. Electrons originating from reduced cytochrome c in the intermembrane space (IMS) are transferred via the dinuclear copper A center (CU(A)) of subunit 2 and heme A of subunit 1 to the active site in subunit 1, a binuclear center (BNC) formed by heme A3 and copper B (CU(B)). The BNC reduces molecular oxygen to 2 water molecules using 4 electrons from cytochrome c in the IMS and 4 protons from the mitochondrial matrix. The polypeptide is Cytochrome c oxidase subunit 2 (MT-CO2) (Antilocapra americana (Pronghorn)).